Consider the following 207-residue polypeptide: Large ribosomal subunit protein uL4 (207 aa).

A disordered region spans residues 48–70; that stretch reads KAQKTRSEVSGGGAKPWRQKGTG.

The protein belongs to the universal ribosomal protein uL4 family. In terms of assembly, part of the 50S ribosomal subunit.

Its function is as follows. One of the primary rRNA binding proteins, this protein initially binds near the 5'-end of the 23S rRNA. It is important during the early stages of 50S assembly. It makes multiple contacts with different domains of the 23S rRNA in the assembled 50S subunit and ribosome. In terms of biological role, forms part of the polypeptide exit tunnel. The protein is Large ribosomal subunit protein uL4 of Francisella tularensis subsp. mediasiatica (strain FSC147).